A 316-amino-acid chain; its full sequence is 4-hydroxy-3-methylbut-2-enyl diphosphate reductase (316 aa).

Cys-12 is a [4Fe-4S] cluster binding site. Positions 41 and 74 each coordinate (2E)-4-hydroxy-3-methylbut-2-enyl diphosphate. Dimethylallyl diphosphate contacts are provided by His-41 and His-74. Positions 41 and 74 each coordinate isopentenyl diphosphate. Cys-96 is a [4Fe-4S] cluster binding site. His-124 is a (2E)-4-hydroxy-3-methylbut-2-enyl diphosphate binding site. His-124 is a dimethylallyl diphosphate binding site. Isopentenyl diphosphate is bound at residue His-124. Glu-126 serves as the catalytic Proton donor. Thr-169 lines the (2E)-4-hydroxy-3-methylbut-2-enyl diphosphate pocket. Residue Cys-199 participates in [4Fe-4S] cluster binding. (2E)-4-hydroxy-3-methylbut-2-enyl diphosphate-binding residues include Ser-227, Ser-228, Asn-229, and Ser-271. Residues Ser-227, Ser-228, Asn-229, and Ser-271 each contribute to the dimethylallyl diphosphate site. Residues Ser-227, Ser-228, Asn-229, and Ser-271 each contribute to the isopentenyl diphosphate site.

It belongs to the IspH family. It depends on [4Fe-4S] cluster as a cofactor.

The enzyme catalyses isopentenyl diphosphate + 2 oxidized [2Fe-2S]-[ferredoxin] + H2O = (2E)-4-hydroxy-3-methylbut-2-enyl diphosphate + 2 reduced [2Fe-2S]-[ferredoxin] + 2 H(+). It catalyses the reaction dimethylallyl diphosphate + 2 oxidized [2Fe-2S]-[ferredoxin] + H2O = (2E)-4-hydroxy-3-methylbut-2-enyl diphosphate + 2 reduced [2Fe-2S]-[ferredoxin] + 2 H(+). Its pathway is isoprenoid biosynthesis; dimethylallyl diphosphate biosynthesis; dimethylallyl diphosphate from (2E)-4-hydroxy-3-methylbutenyl diphosphate: step 1/1. The protein operates within isoprenoid biosynthesis; isopentenyl diphosphate biosynthesis via DXP pathway; isopentenyl diphosphate from 1-deoxy-D-xylulose 5-phosphate: step 6/6. Its function is as follows. Catalyzes the conversion of 1-hydroxy-2-methyl-2-(E)-butenyl 4-diphosphate (HMBPP) into a mixture of isopentenyl diphosphate (IPP) and dimethylallyl diphosphate (DMAPP). Acts in the terminal step of the DOXP/MEP pathway for isoprenoid precursor biosynthesis. The chain is 4-hydroxy-3-methylbut-2-enyl diphosphate reductase from Xanthomonas campestris pv. campestris (strain 8004).